Reading from the N-terminus, the 307-residue chain is sn-1-specific diacylglycerol lipase ABHD11 (307 aa).

Residues 1-34 (MLRWARAWRVPRGVLGASSPRRLAVPVTFCSSRS) constitute a mitochondrion transit peptide. K79 carries the N6-succinyllysine modification. S133 acts as the Charge relay system in catalysis. Residue K196 is modified to N6-succinyllysine. Catalysis depends on charge relay system residues D229 and H288.

This sequence belongs to the AB hydrolase superfamily. In terms of assembly, interacts with OGDH and DLST; this interaction maintains the functional lipoylation of the 2-oxoglutarate dehydrogenase complex. Phosphorylated. As to expression, expressed in white adipose tissues.

The protein resides in the mitochondrion. Its subcellular location is the mitochondrion matrix. It catalyses the reaction 1-octadecanoyl-2-(5Z,8Z,11Z,14Z-eicosatetraenoyl)-sn-glycerol + H2O = 2-(5Z,8Z,11Z,14Z-eicosatetraenoyl)-glycerol + octadecanoate + H(+). It carries out the reaction a 1,2-diacyl-sn-glycerol + H2O = a 2-acylglycerol + a fatty acid + H(+). The enzyme catalyses a 1,3-diacyl-sn-glycerol + H2O = a 1-acyl-sn-glycerol + a fatty acid + H(+). The catalysed reaction is 1-octadecanoyl-2-(9Z-octadecenoyl)-sn-glycerol + H2O = 2-(9Z-octadecenoyl)-glycerol + octadecanoate + H(+). It catalyses the reaction 1-octadecanoyl-2-(4Z,7Z,10Z,13Z,16Z,19Z-docosahexaenoyl)-sn-glycerol + H2O = 2-(4Z,7Z,10Z,13Z,16Z,19Z-docosahexaenoyl)-glycerol + octadecanoate + H(+). It carries out the reaction 1,2-didecanoylglycerol + H2O = decanoylglycerol + decanoate + H(+). Functionally, catalyzes the hydrolysis of diacylglycerol in vitro and may function as a key regulator in lipid metabolism, namely by regulating the intracellular levels of diacylglycerol. 1,2-diacyl-sn-glycerols are the preferred substrate over 1,3-diacyl-sn-glycerols. The enzyme hydrolyzes stearate in preference to palmitate from the sn-1 position of 1,2-diacyl-sn-glycerols. Maintains the functional lipoylation of the 2-oxoglutarate dehydrogenase complex (OGDHc) through its interaction with the OGDHc by preventing the formation of lipoyl adducts. In addition, is also required for the expansion and differentiation of embryonic stem cells (ESCs). This chain is sn-1-specific diacylglycerol lipase ABHD11, found in Mus musculus (Mouse).